The primary structure comprises 217 residues: Large ribosomal subunit protein uL3 (217 aa).

The interval 127 to 162 is disordered; it reads GFSRGPMSHGSKNHRAPGSTGAGTTPGRIYPGKRMA. Residues 142–153 are compositionally biased toward low complexity; it reads APGSTGAGTTPG.

It belongs to the universal ribosomal protein uL3 family. In terms of assembly, part of the 50S ribosomal subunit. Forms a cluster with proteins L14 and L19.

In terms of biological role, one of the primary rRNA binding proteins, it binds directly near the 3'-end of the 23S rRNA, where it nucleates assembly of the 50S subunit. This is Large ribosomal subunit protein uL3 from Prochlorococcus marinus (strain MIT 9312).